We begin with the raw amino-acid sequence, 282 residues long: Probable endonuclease 4 (282 aa).

H71, H111, E147, D181, H184, H218, D231, H233, and E263 together coordinate Zn(2+).

The protein belongs to the AP endonuclease 2 family. Requires Zn(2+) as cofactor.

It catalyses the reaction Endonucleolytic cleavage to 5'-phosphooligonucleotide end-products.. Its function is as follows. Endonuclease IV plays a role in DNA repair. It cleaves phosphodiester bonds at apurinic or apyrimidinic (AP) sites, generating a 3'-hydroxyl group and a 5'-terminal sugar phosphate. This is Probable endonuclease 4 from Protochlamydia amoebophila (strain UWE25).